The following is a 123-amino-acid chain: Alpha-ketoglutarate dehydrogenase subunit 4, mitochondrial (123 aa).

The transit peptide at 1–8 directs the protein to the mitochondrion; that stretch reads MIATPIRL.

The protein belongs to the alpha-ketoglutarate dehydrogenase component 4 family. As to quaternary structure, component of the 2-oxoglutarate dehydrogenase complex (OGDC), also called alpha-ketoglutarate dehydrogenase (KGDH) complex. The copmplex is composed of the catalytic subunits OGDH (2-oxoglutarate dehydrogenase KGD1; also called E1 subunit), DLST (dihydrolipoamide succinyltransferase KGD2; also called E2 subunit) and DLD (dihydrolipoamide dehydrogenase LPD1; also called E3 subunit), and the assembly factor KGD4. Within OGDC, interacts (via N-terminus) with E3 subunit and (via C-terminus) with the complex core formed by E1 and E2 subunits.

The protein resides in the mitochondrion. Its function is as follows. Molecular adapter that is necessary to a form a stable 2-oxoglutarate dehydrogenase enzyme complex (OGDC). Required for incorporation of the E3 subunit (LPD1) into the E1-E2 core (KGD1-KGD2) of mitochondrial OGDC, and acting as a stability factor for the fully assembled complex. This chain is Alpha-ketoglutarate dehydrogenase subunit 4, mitochondrial, found in Saccharomyces cerevisiae (strain ATCC 204508 / S288c) (Baker's yeast).